Consider the following 531-residue polypeptide: Achacin (531 aa).

A signal peptide spans 1–22; sequence MLLLNSALFILCLVCWLPGTSS. Residues 23-29 constitute a propeptide that is removed on maturation; the sequence is SRVLTRR. N-linked (GlcNAc...) asparagine glycosylation is found at Asn112, Asn150, Asn308, and Asn392.

To A.kurodai aplysianin-A. Homodimer. Collar tissue.

In terms of biological role, antibacterial glycoprotein. The protein is Achacin of Lissachatina fulica (Giant African land snail).